The following is a 1395-amino-acid chain: MLLPLPPQSSKPVPKKSQSSKIVPSHHDPSEKTGENCQTKISPSSLQESPSSLQGALKKRSAFEDLTNASQCQPVQPKKEANKEFVKVVSKKINRNTHALGLAKKNKRNLKWHKLEVTPVVASTTVVPNIMEKPLILDISTTSKTPNTEEASLFRKPLVLKEEPTIEDETLINKSLSLKKCSNHEEVSLLEKLQPLQEESDSDDAFVIEPMTFKKTHKTEEAAITKKTLSLKKKMCASQRKQSCQEESLAVQDVNMEEDSFFMESMSFKKKPKTEESIPTHKLSSLKKKCTIYGKICHFRKPPVLQTTICGAMSSIKKPTTEKETLFQELSVLQEKHTTEHEMSILKKSLALQKTNFKEDSLVKESLAFKKKPSTEEAIMMPVILKEQCMTEGKRSRLKPLVLQEITSGEKSLIMKPLSIKEKPSTEKESFSQEPSALQKKHTTQEEVSILKEPSSLLKSPTEESPFDEALAFTKKCTIEEAPPTKKPLILKRKHATQGTMSHLKKPLILQTTSGEKSLIKEPLPFKEEKVSLKKKCTTQEMMSICPELLDFQDMIGEDKNSFFMEPMSFRKNPTTEETVLTKTSLSLQEKKITQGKMSHLKKPLVLQKITSEEESFYKKLLPFKMKSTTEEKFLSQEPSALKEKHTTLQEVSLSKESLAIQEKATTEEEFSQELFSLHVKHTNKSGSLFQEALVLQEKTDAEEDSLKNLLALQEKSTMEEESLINKLLALKEELSAEAATNIQTQLSLKKKSTSHGKVFFLKKQLALNETINEEEFLNKQPLALEGYPSIAEGETLFKKLLAMQEEPSIEKEAVLKEPTIDTEAHFKEPLALQEEPSTEKEAVLKEPSVDTEAHFKETLALQEKPSIEQEALFKRHSALWEKPSTEKETIFKESLDLQEKPSIKKETLLKKPLALKMSTINEAVLFEDMIALNEKPTTGKELSFKEPLALQESPTYKEDTFLKTLLVPQVGTSPNVSSTAPESITSKSSIATMTSVGKSGTINEAFLFEDMITLNEKPTTGKELSFKEPLALQESPTCKEDTFLETFLIPQIGTSPYVFSTTPESITEKSSIATMTSVGKSRTTTESSACESASDKPVSPQAKGTPKEITPREDIDEDSSDPSFNPMYAKEIFSYMKEREEQFILTDYMNRQIEITSDMRAILVDWLVEVQVSFEMTHETLYLAVKLVDLYLMKAVCKKDKLQLLGATAFMIAAKFEEHNSPRVDDFVYICDDNYQRSEVLSMEINILNVLKCDINIPIAYHFLRRYARCIHTNMKTLTLSRYICEMTLQEYHYVQEKASKLAAASLLLALYMKKLGYWVPFLEHYSGYSISELHPLVRQLNKLLTFSSYDSLKAVYYKYSHPVFFEVAKIPALDMLKLEEILNCDCEAQGLVL.

Residues 1-59 are disordered; that stretch reads MLLPLPPQSSKPVPKKSQSSKIVPSHHDPSEKTGENCQTKISPSSLQESPSSLQGALKK. Residues 10–23 are compositionally biased toward low complexity; that stretch reads SKPVPKKSQSSKIV. Basic and acidic residues predominate over residues 25–34; the sequence is SHHDPSEKTG. The segment covering 42–54 has biased composition (low complexity); it reads SPSSLQESPSSLQ. The short motif at 60-68 is the D-box element; the sequence is RSAFEDLTN. 2 disordered regions span residues 418–464 and 1074–1122; these read LSIK…PTEE and ATMT…DSSD. Residues 419–431 are compositionally biased toward basic and acidic residues; sequence SIKEKPSTEKESF. Over residues 1082–1093 the composition is skewed to low complexity; it reads SRTTTESSACES.

It belongs to the cyclin family. Cyclin AB subfamily. Interacts with CDK2 kinase. Post-translationally, ubiquitinated. Ubiquitination leads to its degradation during anaphase entry, after degradation of CCNB1. As to expression, testis specific. In testis, it is expressed in developing germ cells, but not in Leydig cells. Weakly or not expressed in other tissues.

The protein localises to the nucleus. Its function is as follows. Cyclins are positive regulatory subunits of the cyclin-dependent kinases (CDKs), and thereby play an essential role in the control of the cell cycle, notably via their destruction during cell division. Its tissue specificity suggest that it may be required during early meiotic prophase I. In Homo sapiens (Human), this protein is G2/mitotic-specific cyclin-B3 (CCNB3).